Consider the following 380-residue polypeptide: Cytochrome b (380 aa).

The next 4 membrane-spanning stretches (helical) occupy residues 34-54 (FGSL…LLAM), 78-99 (WLIR…YLHI), 114-134 (WNTG…GYVL), and 179-199 (FFAL…IHLT). Residues histidine 84 and histidine 98 each contribute to the heme b site. Heme b-binding residues include histidine 183 and histidine 197. Histidine 202 provides a ligand contact to a ubiquinone. Transmembrane regions (helical) follow at residues 227 to 247 (LKDA…ALFS), 289 to 309 (LGGV…PLLH), 321 to 341 (LSQL…WVGS), and 348 to 368 (FIII…ILFP).

The protein belongs to the cytochrome b family. The cytochrome bc1 complex contains 11 subunits: 3 respiratory subunits (MT-CYB, CYC1 and UQCRFS1), 2 core proteins (UQCRC1 and UQCRC2) and 6 low-molecular weight proteins (UQCRH/QCR6, UQCRB/QCR7, UQCRQ/QCR8, UQCR10/QCR9, UQCR11/QCR10 and a cleavage product of UQCRFS1). This cytochrome bc1 complex then forms a dimer. The cofactor is heme b.

Its subcellular location is the mitochondrion inner membrane. Component of the ubiquinol-cytochrome c reductase complex (complex III or cytochrome b-c1 complex) that is part of the mitochondrial respiratory chain. The b-c1 complex mediates electron transfer from ubiquinol to cytochrome c. Contributes to the generation of a proton gradient across the mitochondrial membrane that is then used for ATP synthesis. The sequence is that of Cytochrome b (MT-CYB) from Oceanites oceanicus (Wilson's storm petrel).